The following is an 870-amino-acid chain: Serine protease DegP homolog (870 aa).

The first 29 residues, 1–29 (MDIIFCTPTYCKIMLMIIMLISLRTRCDT), serve as a signal peptide directing secretion. A disordered region spans residues 128-151 (KNPLNDNFKNPKLRKHSPNNKKNK). Residues 138–151 (PKLRKHSPNNKKNK) show a composition bias toward basic residues. Catalysis depends on charge relay system residues His328, Asp359, and Ser437.

The protein belongs to the peptidase S1C family. As to quaternary structure, oligomer; may form trimers or hexamers. Forms a complex at least composed of DegP, ENO and HSP70.

It is found in the cytoplasm. The protein resides in the parasitophorous vacuole. Its subcellular location is the host cell membrane. The protein localises to the host cytoplasm. In terms of biological role, serine protease which also acts as a protein chaperone. Plays a role in the parasite development in host erythrocytes possibly by protecting it against thermal and oxidative stresses. The sequence is that of Serine protease DegP homolog from Plasmodium falciparum (isolate 3D7).